The chain runs to 102 residues: Small ribosomal subunit protein eS24 (102 aa).

This sequence belongs to the eukaryotic ribosomal protein eS24 family.

In Haloarcula marismortui (strain ATCC 43049 / DSM 3752 / JCM 8966 / VKM B-1809) (Halobacterium marismortui), this protein is Small ribosomal subunit protein eS24 (rps24e).